We begin with the raw amino-acid sequence, 387 residues long: Small ribosomal subunit biogenesis GTPase RsgA (387 aa).

A CP-type G domain is found at 112 to 273 (YDGLKPVAAN…LIDSPGVREF (162 aa)). Residues 159 to 162 (NKID) and 213 to 221 (GQSGVGKSS) contribute to the GTP site. Zn(2+) is bound by residues Cys-297, Cys-302, His-304, and Cys-310.

It belongs to the TRAFAC class YlqF/YawG GTPase family. RsgA subfamily. As to quaternary structure, monomer. Associates with 30S ribosomal subunit, binds 16S rRNA. It depends on Zn(2+) as a cofactor.

Its subcellular location is the cytoplasm. In terms of biological role, one of several proteins that assist in the late maturation steps of the functional core of the 30S ribosomal subunit. Helps release RbfA from mature subunits. May play a role in the assembly of ribosomal proteins into the subunit. Circularly permuted GTPase that catalyzes slow GTP hydrolysis, GTPase activity is stimulated by the 30S ribosomal subunit. This is Small ribosomal subunit biogenesis GTPase RsgA from Vibrio cholerae serotype O1 (strain ATCC 39315 / El Tor Inaba N16961).